Consider the following 68-residue polypeptide: Lantibiotic mersacidin (68 aa).

A disordered region spans residues 1–28; that stretch reads MSQEAIIRSWKDPFSRENSTQNPAGNPF. Residues 1-48 constitute a propeptide that is removed on maturation; the sequence is MSQEAIIRSWKDPFSRENSTQNPAGNPFSELKEAQMDKLVGAGDMEAA. The beta-methyllanthionine (Cys-Thr) cross-link spans 49-50; that stretch reads CT. Cross-links (beta-methyllanthionine (Thr-Cys)) lie at residues 52 to 60 and 61 to 66; these read TLPGGGGVC and TLTSEC. Residues 63–68 constitute a cross-link (S-(2-aminovinyl)-3-methyl-D-cysteine (Thr-Cys)); that stretch reads TSECIC. 2,3-didehydroalanine (Ser) is present on Ser-64.

The protein belongs to the type B lantibiotic family. Maturation of lantibiotics involves the enzymatic conversion of Thr, and Ser into dehydrated AA and the formation of thioether bonds with cysteine. The carboxy-terminal beta-methyllanthionine undergoes decarboxylation. This is followed by membrane translocation and cleavage of the modified precursor.

In terms of biological role, kills a number of Gram-positive bacteria. Acts at the level of cell wall biosynthesis by interfering with bacterial peptidoglycan biosynthesis. Specifically inhibits the conversion of the lipid II intermediate into polymeric nascent glycan strands by transglycosylation. May interact with the peptidoglycan precursor rather than with the enzyme. This chain is Lantibiotic mersacidin (mrsA), found in Bacillus sp. (strain HIL-Y85/54728).